The sequence spans 339 residues: DNA-directed RNA polymerase subunit alpha (339 aa).

The interval 1–235 is alpha N-terminal domain (alpha-NTD); the sequence is MTIQKNWQEL…DQLNVFVNFE (235 aa). The alpha C-terminal domain (alpha-CTD) stretch occupies residues 251-339; sequence FNPAFLKKVD…ELAKRFEDHY (89 aa).

Belongs to the RNA polymerase alpha chain family. Homodimer. The RNAP catalytic core consists of 2 alpha, 1 beta, 1 beta' and 1 omega subunit. When a sigma factor is associated with the core the holoenzyme is formed, which can initiate transcription.

It catalyses the reaction RNA(n) + a ribonucleoside 5'-triphosphate = RNA(n+1) + diphosphate. In terms of biological role, DNA-dependent RNA polymerase catalyzes the transcription of DNA into RNA using the four ribonucleoside triphosphates as substrates. This Rhodopseudomonas palustris (strain BisA53) protein is DNA-directed RNA polymerase subunit alpha.